Reading from the N-terminus, the 109-residue chain is uncharacterized protein (109 aa).

Residues Val26–Leu48 traverse the membrane as a helical segment.

It is found in the membrane. This is an uncharacterized protein from Saccharomyces cerevisiae (strain ATCC 204508 / S288c) (Baker's yeast).